Consider the following 210-residue polypeptide: PEP-dependent dihydroxyacetone kinase, ADP-binding subunit DhaL (210 aa).

The region spanning 6–206 (TQIVNWLTRC…VMFMMQMLAL (201 aa)) is the DhaL domain. Positions 30, 35, and 37 each coordinate Mg(2+). Residues 38–41 (HGLN), 79–80 (AS), G121, M130, R178, and 191–193 (DPG) contribute to the ADP site.

Homodimer. The dihydroxyacetone kinase complex is composed of a homodimer of DhaM, a homodimer of DhaK and the subunit DhaL. DhaL also forms a complex with DhaR. Requires Mg(2+) as cofactor.

The protein resides in the cytoplasm. It catalyses the reaction dihydroxyacetone + phosphoenolpyruvate = dihydroxyacetone phosphate + pyruvate. It participates in polyol metabolism; glycerol degradation. Its function is as follows. ADP-binding subunit of the dihydroxyacetone kinase, which is responsible for the phosphoenolpyruvate (PEP)-dependent phosphorylation of dihydroxyacetone. DhaL-ADP is converted to DhaL-ATP via a phosphoryl group transfer from DhaM and transmits it to dihydroxyacetone bound to DhaK. DhaL also acts as coactivator of the transcription activator DhaR by binding to the sensor domain of DhaR. In the presence of dihydroxyacetone, DhaL-ADP displaces DhaK and stimulates DhaR activity. In the absence of dihydroxyacetone, DhaL-ADP is converted by the PTS to DhaL-ATP, which does not bind to DhaR. This chain is PEP-dependent dihydroxyacetone kinase, ADP-binding subunit DhaL, found in Escherichia coli (strain K12).